The sequence spans 346 residues: MDQDKYLPELVAEKESLDASFVHAMRLLAEEIEKFEGDELRKDGEVKKYLDIISNKNIKLSERVLIPVQQYPKFNFVGKLLGPRGNSMKRLQEETGAKMSILGKGSMRDKGKEEELRKSGEAKYAHLSNDLHVLIEVFAPPGEAYSRMSHALEEIKKFLVPDYNDEIRQEQLRELSYLNGSDDPSRGRSARGRGLRLTSTASPRGRGSAAPPAPPGRGAAAPRGTVSSRTSVPTPARGVSAPRTRGTAGTPGYRAPSLQATHKTYEDYGYDDGYDGEYDDQSYESYDDNYSNQSKSVSEYYEYGHGNNDENYNNYEEDWISSRPNLKAPASRLTRGGYRDHPYGRY.

The region spanning 65 to 131 is the KH domain; the sequence is LIPVQQYPKF…AKYAHLSNDL (67 aa). Residues 175–291 are disordered; sequence LSYLNGSDDP…SYESYDDNYS (117 aa). A compositionally biased stretch (low complexity) spans 195-224; that stretch reads LRLTSTASPRGRGSAAPPAPPGRGAAAPRG. Positions 268–287 are enriched in acidic residues; it reads YGYDDGYDGEYDDQSYESYD.

The protein belongs to the KHDRBS family.

The protein resides in the nucleus. RNA-binding protein that plays a role in the regulation of alternative splicing. The protein is KH domain-containing, RNA-binding, signal transduction-associated protein 2 (khdrbs2) of Danio rerio (Zebrafish).